We begin with the raw amino-acid sequence, 379 residues long: MATAGKVIKCRAAVTWEAGKPLSIEEVEVAPPQAMEVRIKILYTALCHTDVYFWEAKGQTPVFPRILGHEAGGIVESVGEGVTDVAPGDHVLPVFTGECKECAHCKSEESNMCDLLRINVDRGVMIGDGKSRFTISGQPIFHFVGTSTFSEYTVIHVGCLAKINPEAPLDKVCILSCGISTGLGATLNVAKPAKGSTVAIFGLGAVGLAAMEGARLAGASRIIGVDINPAKYEQAKKFGCTEFVNPKDHDKPVQEVLIELTNGGVDRSVECTGNVNAMISAFECVHDGWGVAVLVGVPHKDDQFKTHPMNFLSEKTLKGTFFGNYKPRTDLPNVVEMYMKKELELEKFITHSVPFSEINTAFDLMLKGESLRCIMRMED.

Residues Cys-47, Thr-49, His-69, Cys-99, Cys-102, Cys-105, Cys-113, and Cys-177 each contribute to the Zn(2+) site. Residues Thr-49 and His-69 each coordinate an alcohol. Thr-49 provides a ligand contact to NAD(+). NAD(+) is bound by residues 202 to 207, Asp-226, Lys-231, Thr-272, Val-295, 295 to 297, Phe-322, and Arg-372; these read GLGAVG and VGV.

It belongs to the zinc-containing alcohol dehydrogenase family. Homodimer. The cofactor is Zn(2+).

It localises to the cytoplasm. The catalysed reaction is a primary alcohol + NAD(+) = an aldehyde + NADH + H(+). It catalyses the reaction a secondary alcohol + NAD(+) = a ketone + NADH + H(+). The chain is Alcohol dehydrogenase 2 (ADH2) from Zea mays (Maize).